A 209-amino-acid polypeptide reads, in one-letter code: Small ribosomal subunit protein uS3 (209 aa).

The KH type-2 domain maps to I38–K107.

The protein belongs to the universal ribosomal protein uS3 family. In terms of assembly, part of the 30S ribosomal subunit. Forms a tight complex with proteins S10 and S14.

In terms of biological role, binds the lower part of the 30S subunit head. Binds mRNA in the 70S ribosome, positioning it for translation. The protein is Small ribosomal subunit protein uS3 of Pseudothermotoga lettingae (strain ATCC BAA-301 / DSM 14385 / NBRC 107922 / TMO) (Thermotoga lettingae).